The sequence spans 93 residues: SH3 domain-binding glutamic acid-rich-like protein 3 (93 aa).

Ser2 carries the N-acetylserine modification. Positions 2–93 constitute a Glutaredoxin domain; the sequence is SGLRVYSTSV…NTLQEFLKLA (92 aa). O-linked (GalNAc...) threonine glycosylation is present at Thr9.

The protein belongs to the SH3BGR family. In terms of assembly, homodimer. Interacts with MYO1C (via its IQ motifs); the interaction is dependent on calcium and takes place at membrane ruffles. In terms of processing, may be glycosylated.

It localises to the cytoplasm. It is found in the cytosol. Its subcellular location is the cell projection. The protein localises to the ruffle membrane. The protein resides in the nucleus. In terms of biological role, could act as a modulator of glutaredoxin biological activity. May play a role in cytoskeleton organization. This Bos taurus (Bovine) protein is SH3 domain-binding glutamic acid-rich-like protein 3 (SH3BGRL3).